We begin with the raw amino-acid sequence, 214 residues long: A-type ATP synthase subunit D (214 aa).

It belongs to the V-ATPase D subunit family. As to quaternary structure, has multiple subunits with at least A(3), B(3), C, D, E, F, H, I and proteolipid K(x).

Its subcellular location is the cell membrane. Functionally, component of the A-type ATP synthase that produces ATP from ADP in the presence of a proton gradient across the membrane. The protein is A-type ATP synthase subunit D of Pyrococcus horikoshii (strain ATCC 700860 / DSM 12428 / JCM 9974 / NBRC 100139 / OT-3).